We begin with the raw amino-acid sequence, 281 residues long: Pantothenate synthetase (281 aa).

26–33 (MGNLHDGH) serves as a coordination point for ATP. His33 serves as the catalytic Proton donor. Position 57 (Gln57) interacts with (R)-pantoate. Gln57 serves as a coordination point for beta-alanine. 145-148 (GEKD) is a binding site for ATP. (R)-pantoate is bound at residue Gln151. 182–185 (MSSR) serves as a coordination point for ATP.

This sequence belongs to the pantothenate synthetase family. As to quaternary structure, homodimer.

It is found in the cytoplasm. It catalyses the reaction (R)-pantoate + beta-alanine + ATP = (R)-pantothenate + AMP + diphosphate + H(+). Its pathway is cofactor biosynthesis; (R)-pantothenate biosynthesis; (R)-pantothenate from (R)-pantoate and beta-alanine: step 1/1. In terms of biological role, catalyzes the condensation of pantoate with beta-alanine in an ATP-dependent reaction via a pantoyl-adenylate intermediate. This chain is Pantothenate synthetase, found in Idiomarina loihiensis (strain ATCC BAA-735 / DSM 15497 / L2-TR).